The chain runs to 626 residues: Dual specificity testis-specific protein kinase 1 (626 aa).

Positions 1–41 (MAGERPPLRGPGPGPGEVPGEGPPGPGGTGGGPGRGRPSSY) are disordered. Residues 8-26 (LRGPGPGPGEVPGEGPPGP) are compositionally biased toward pro residues. Residues 57–314 (FHCAEKIGAG…TEITQHLEWI (258 aa)) enclose the Protein kinase domain. ATP contacts are provided by residues 63 to 71 (IGAGFFSEV) and K86. D175 acts as the Proton acceptor in catalysis. S220 carries the phosphoserine; by autocatalysis modification. Disordered stretches follow at residues 331-373 (HNQG…NWGD), 423-488 (ETLV…QLPL), and 529-564 (WAGEPWNRAQHSLPRAAALERTEPSPPPSAPREPDE). R338 carries the post-translational modification Omega-N-methylarginine. Over residues 348-357 (PDPRLSRSRS) the composition is skewed to basic and acidic residues. A required for interaction with YWHAB region spans residues 419 to 524 (VTTPETLVQP…NNNPPAVVVN (106 aa)). Positions 476 to 485 (EPEPPGPAPQ) are enriched in pro residues. The segment at 527 to 624 (QGWAGEPWNR…PTPSLQLPGA (98 aa)) is required for interaction with PARVA. Positions 527-626 (QGWAGEPWNR…PSLQLPGARS (100 aa)) are required for interaction with SPRED1 and SPRY2. Required for TESK1-mediated dephosphorylation of SPRY2 and SPRY2 inhibition of ERK phosphorylation.

This sequence belongs to the protein kinase superfamily. TKL Ser/Thr protein kinase family. Interacts (via both C- and N-termini) with SPRY4 (via C-terminus); the interaction inhibits TESK1 kinase activity. Interacts with TAOK1; the interaction inhibits TAOK1 kinase activity. Interacts (via C-terminus) with SPRED1 (via C-terminus); the interaction inhibits TESK1 kinase activity. Interacts (via C-terminus) with PARVA/PARVIN (via C-terminus); the interaction inhibits TESK1 kinase activity. Interacts with YWHAB/14-3-3 beta; the interaction is dependent on the phosphorylation of TESK1 Ser-437 and inhibits TESK1 kinase activity. Interacts with SPRY1, SPRY3 and SPRED2. Interacts (via C-terminus) with SPRY2 (via C-terminus); the interaction disrupts SPRY2 interaction with PPP2CA/PP2A-C, possibly by vesicular sequestration of SPRY2. Therefore dephosphorylation of SPRY2 by the serine/threonine-protein phosphatase 2A (PP2A) holoenzyme is lost, inhibiting its interaction with GRB2. Requires Mg(2+) as cofactor. It depends on Mn(2+) as a cofactor. Post-translationally, autophosphorylated on serine and tyrosine residues. In terms of tissue distribution, expressed in podocytes and renal tubular cells in the kidney (at protein level).

It localises to the cytoplasm. The protein resides in the perinuclear region. Its subcellular location is the cytoskeleton. It is found in the microtubule organizing center. The protein localises to the centrosome. It localises to the cell projection. The protein resides in the lamellipodium. It carries out the reaction L-seryl-[protein] + ATP = O-phospho-L-seryl-[protein] + ADP + H(+). It catalyses the reaction L-threonyl-[protein] + ATP = O-phospho-L-threonyl-[protein] + ADP + H(+). The catalysed reaction is L-tyrosyl-[protein] + ATP = O-phospho-L-tyrosyl-[protein] + ADP + H(+). Activated by autophosphorylation on Ser-220. Kinase activity is inhibited by SPRED1. In terms of biological role, dual specificity protein kinase activity catalyzing autophosphorylation and phosphorylation of exogenous substrates on both serine/threonine and tyrosine residues. Regulates the cellular cytoskeleton by enhancing actin stress fiber formation via phosphorylation of cofilin and by preventing microtubule breakdown via inhibition of TAOK1/MARKK kinase activity. Inhibits podocyte motility via regulation of actin cytoskeletal dynamics and phosphorylation of CFL1. Positively regulates integrin-mediated cell spreading, via phosphorylation of cofilin. Suppresses ciliogenesis via multiple pathways; phosphorylation of CFL1, suppression of ciliary vesicle directional trafficking to the ciliary base, and by facilitating YAP1 nuclear localization where it acts as a transcriptional corepressor of the TEAD4 target genes AURKA and PLK1. Probably plays a central role at and after the meiotic phase of spermatogenesis. The sequence is that of Dual specificity testis-specific protein kinase 1 (TESK1) from Homo sapiens (Human).